Here is a 208-residue protein sequence, read N- to C-terminus: Glutathione S-transferase GstB (208 aa).

The GST N-terminal domain occupies 1–83 (MITLWGRNNS…YLAAQYGQKR (83 aa)). Glutathione contacts are provided by residues asparagine 12, asparagine 39, valine 53, and 67–68 (ES). Residues 88–208 (SPARRAEAEK…VRKVVMIPVS (121 aa)) enclose the GST C-terminal domain.

Belongs to the GST superfamily.

The catalysed reaction is RX + glutathione = an S-substituted glutathione + a halide anion + H(+). In terms of biological role, conjugation of reduced glutathione to a wide number of exogenous and endogenous hydrophobic electrophiles. This chain is Glutathione S-transferase GstB (gstB), found in Escherichia coli O6:H1 (strain CFT073 / ATCC 700928 / UPEC).